The primary structure comprises 103 residues: Trp operon repressor homolog (103 aa).

The DNA-binding element occupies 62–85 (QRKISELLGVGVATITRGSNELKH).

Belongs to the TrpR family. Homodimer.

It localises to the cytoplasm. Functionally, this protein is an aporepressor. When complexed with L-tryptophan it binds the operator region of the trp operon and prevents the initiation of transcription. This chain is Trp operon repressor homolog, found in Photobacterium profundum (strain SS9).